The chain runs to 370 residues: Protein-glutamate methylesterase/protein-glutamine glutaminase of group 1 operon (370 aa).

Residues Lys-4–Leu-121 enclose the Response regulatory domain. Asp-55 carries the post-translational modification 4-aspartylphosphate. Residues Pro-150–Ala-180 are compositionally biased toward low complexity. Residues Pro-150–Arg-183 form a disordered region. A CheB-type methylesterase domain is found at Pro-179–Val-370. Catalysis depends on residues Ser-194, His-221, and Asp-314.

This sequence belongs to the CheB family. In terms of processing, phosphorylated by CheA. Phosphorylation of the N-terminal regulatory domain activates the methylesterase activity.

It localises to the cytoplasm. The enzyme catalyses [protein]-L-glutamate 5-O-methyl ester + H2O = L-glutamyl-[protein] + methanol + H(+). It carries out the reaction L-glutaminyl-[protein] + H2O = L-glutamyl-[protein] + NH4(+). Functionally, involved in chemotaxis. Part of a chemotaxis signal transduction system that modulates chemotaxis in response to various stimuli. Catalyzes the demethylation of specific methylglutamate residues introduced into the chemoreceptors (methyl-accepting chemotaxis proteins or MCP) by CheR. Also mediates the irreversible deamidation of specific glutamine residues to glutamic acid. The polypeptide is Protein-glutamate methylesterase/protein-glutamine glutaminase of group 1 operon (Pseudomonas putida (strain ATCC 47054 / DSM 6125 / CFBP 8728 / NCIMB 11950 / KT2440)).